Reading from the N-terminus, the 400-residue chain is Na(+)/H(+) antiporter NhaA (400 aa).

11 helical membrane passes run 9 to 29 (FLVSEASGGIFLIAAAVIAMV), 60 to 80 (LILWVNDGLMAIFFFVLGLEL), 96 to 116 (VLPAVGAIGGIVVPAFIFYLF), 127 to 147 (WAIPTATDTAFALGIIMILGA), 155 to 175 (IFLVTLAIIDDVCAILIMAIF), 180 to 200 (LSLISFGVAAIVILGLLALNL), 210 to 230 (LILGIILWISVLKSGVHATLA), 263 to 283 (YFVLPVFAFVNAGISLKGIGL), 294 to 314 (VILGLFLGKQIGVFGFCFVAI), 327 to 347 (WISFYGLCILTGIGFTMSLFI), and 366 to 386 (VLIASVISGVLGYIVLYIASV).

It belongs to the NhaA Na(+)/H(+) (TC 2.A.33) antiporter family.

The protein resides in the cell inner membrane. The catalysed reaction is Na(+)(in) + 2 H(+)(out) = Na(+)(out) + 2 H(+)(in). Na(+)/H(+) antiporter that extrudes sodium in exchange for external protons. This is Na(+)/H(+) antiporter NhaA from Campylobacter curvus (strain 525.92).